The following is a 231-amino-acid chain: Octanoyltransferase (231 aa).

The 183-residue stretch at 49–231 folds into the BPL/LPL catalytic domain; it reads SEAAEQVWLL…KRTFSEVFGS (183 aa). Substrate is bound by residues 87–94, 162–164, and 175–177; these read RGGQITYH, AIG, and GVS. Residue cysteine 193 is the Acyl-thioester intermediate of the active site.

Belongs to the LipB family.

It is found in the cytoplasm. The catalysed reaction is octanoyl-[ACP] + L-lysyl-[protein] = N(6)-octanoyl-L-lysyl-[protein] + holo-[ACP] + H(+). It functions in the pathway protein modification; protein lipoylation via endogenous pathway; protein N(6)-(lipoyl)lysine from octanoyl-[acyl-carrier-protein]: step 1/2. Its function is as follows. Catalyzes the transfer of endogenously produced octanoic acid from octanoyl-acyl-carrier-protein onto the lipoyl domains of lipoate-dependent enzymes. Lipoyl-ACP can also act as a substrate although octanoyl-ACP is likely to be the physiological substrate. This is Octanoyltransferase from Nitrobacter winogradskyi (strain ATCC 25391 / DSM 10237 / CIP 104748 / NCIMB 11846 / Nb-255).